The primary structure comprises 33 residues: Dermaseptin-H8 (33 aa).

Leucine amide is present on L33.

Expressed by the skin glands.

The protein localises to the secreted. Has antimicrobial activity. This Pithecopus hypochondrialis (Orange-legged leaf frog) protein is Dermaseptin-H8.